The sequence spans 474 residues: Gamma-aminobutyric acid receptor subunit beta-2 (474 aa).

The first 25 residues, 1 to 25 (MWRVRKRGYFGIWSFPLIIAAVCAQ), serve as a signal peptide directing secretion. At 26–244 (SVNDPSNMSL…SFKLKRNIGY (219 aa)) the chain is on the extracellular side. Residues Asn-32 and Asn-104 are each glycosylated (N-linked (GlcNAc...) asparagine). Tyr-121 provides a ligand contact to histamine. Cys-160 and Cys-174 are joined by a disulfide. Asn-173 is a glycosylation site (N-linked (GlcNAc...) asparagine). Histamine is bound by residues 180-181 (SY) and Thr-226. Residues Tyr-181 and Thr-226 each contribute to the 4-aminobutanoate site. The next 3 helical transmembrane spans lie at 245–266 (FILQ…SFWI), 270–292 (ASAA…NTHL), and 304–326 (AIDM…YALV). The Cytoplasmic segment spans residues 327 to 451 (NYIFFGRGPQ…DLTDVNAIDR (125 aa)). Position 403 is a phosphotyrosine (Tyr-403). A helical membrane pass occupies residues 452-473 (WSRIFFPVVFSFFNIVYWLYYV).

The protein belongs to the ligand-gated ion channel (TC 1.A.9) family. Gamma-aminobutyric acid receptor (TC 1.A.9.5) subfamily. GABRB2 sub-subfamily. In terms of assembly, heteropentamer, formed by a combination of alpha (GABRA1-6), beta (GABRB1-3), gamma (GABRG1-3), delta (GABRD), epsilon (GABRE), rho (GABRR1-3), pi (GABRP) and theta (GABRQ) chains, each subunit exhibiting distinct physiological and pharmacological properties. Interacts with UBQLN1. May interact with KIF21B. Identified in a complex of 720 kDa composed of LHFPL4, NLGN2, GABRA1, GABRB2, GABRG2 and GABRB3. Post-translationally, glycosylated. In terms of tissue distribution, expressed in brain (at protein level), in cerebellar granule cells. Expressed in lungs, in alveolar epithelium.

The protein localises to the postsynaptic cell membrane. It is found in the cell membrane. Its subcellular location is the cytoplasmic vesicle membrane. The catalysed reaction is chloride(in) = chloride(out). Its activity is regulated as follows. Allosterically activated by benzodiazepines and the anesthetic etomidate. Inhibited by the antagonist bicuculline. Potentiated by histamine. Its function is as follows. Beta subunit of the heteropentameric ligand-gated chloride channel gated by gamma-aminobutyric acid (GABA), a major inhibitory neurotransmitter in the brain. GABA-gated chloride channels, also named GABA(A) receptors (GABAAR), consist of five subunits arranged around a central pore and contain GABA active binding site(s) located at the alpha and beta subunit interface(s). When activated by GABA, GABAARs selectively allow the flow of chloride anions across the cell membrane down their electrochemical gradient. Chloride influx into the postsynaptic neuron following GABAAR opening decreases the neuron ability to generate a new action potential, thereby reducing nerve transmission. GABAARs containing alpha-1 and beta-2 or -3 subunits exhibit synaptogenic activity; the gamma-2 subunit being necessary but not sufficient to induce rapid synaptic contacts formation. Extrasynaptic beta-2 receptors contribute to the tonic GABAergic inhibition. Beta-containing GABAARs can simultaneously bind GABA and histamine where histamine binds at the interface of two neighboring beta subunits, which may be involved in the regulation of sleep and wakefulness. The sequence is that of Gamma-aminobutyric acid receptor subunit beta-2 from Rattus norvegicus (Rat).